The primary structure comprises 1437 residues: IQ domain-containing protein N (1437 aa).

Positions 84-112 constitute an IQ 1 domain; the sequence is SRAATVIQASWKGYRLRQKLISQMTAAKA. Disordered regions lie at residues 332–353, 416–440, and 848–878; these read TSPT…SLSN, SQAQ…KPSP, and STGS…QNPR. Low complexity predominate over residues 422-440; it reads TVSTSSKTSPSSPTVKPSP. Over residues 861–878 the composition is skewed to polar residues; it reads AQPQLHSHAPNKTMQNPR. IQ domains are found at residues 1190–1216, 1217–1239, 1240–1258, 1361–1389, and 1390–1413; these read QAVV…QWAT, IIQA…RATT, IIQA…ARQV, QHRA…SAAK, and MVQA…LGTG.

Interacts with calmodulin. As to expression, expressed in testis, in elongating spermatids (at protein level).

Its function is as follows. Essential for spermiogenesis and fertilization. May be required for manchette assembly in elongating spermatids. This is IQ domain-containing protein N (Iqcn) from Mus musculus (Mouse).